The primary structure comprises 479 residues: G-rich sequence factor 1 (479 aa).

A mitochondrion-targeting transit peptide spans 1-116; that stretch reads MAGTRWVLGA…AAAAGPARGY (116 aa). 2 consecutive RRM domains span residues 149-245 and 249-325; these read YLIR…PSPV and GVVR…PSRR. The residue at position 243 (S243) is a Phosphoserine. S334 carries the post-translational modification Phosphoserine. The RRM 3 domain maps to 400–479; it reads HFVHMRGLPF…LFLNSCPKGK (80 aa).

Monomer. Found in a complex with DDX28, DHX30, FASTKD2 and FASTKD5. Interacts with the mitochondrial RNase P complex subunit TRMT10C/MRPP1. Interacts with the 2 components of the mitochondrial degradosome complex, PNPT1 and SUPV3L1, in an RNA-dependent manner.

It localises to the mitochondrion matrix. Regulator of post-transcriptional mitochondrial gene expression, required for assembly of the mitochondrial ribosome and for recruitment of mRNA and lncRNA. Binds RNAs containing the 14 base G-rich element. Preferentially binds RNAs transcribed from three contiguous genes on the light strand of mtDNA, the ND6 mRNA, and the long non-coding RNAs for MT-CYB and MT-ND5, each of which contains multiple consensus binding sequences. Involved in the degradosome-mediated decay of non-coding mitochondrial transcripts (MT-ncRNA) and tRNA-like molecules. Acts by unwinding G-quadruplex RNA structures in MT-ncRNA, thus facilitating their degradation by the degradosome. G-quadruplexes (G4) are non-canonical 4 stranded structures formed by transcripts from the light strand of mtDNA. The sequence is that of G-rich sequence factor 1 (Grsf1) from Mus musculus (Mouse).